Consider the following 186-residue polypeptide: Probable calcium-binding protein CML25 (186 aa).

Over residues 1-17 (MFNKNQGSNGGSSSNVG) the composition is skewed to low complexity. The tract at residues 1-23 (MFNKNQGSNGGSSSNVGIGADSP) is disordered. EF-hand domains lie at 33–68 (TEIRELEAVFKKFDVNGDGKISSKELGAIMTSLGHE), 69–104 (VPEEELEKAITEIDRKGDGYINFEEFVELNTKGMDQ), 106–141 (DVLENLKDAFSVYDIDGNGSISAEELHEVLRSLGDE), and 142–177 (CSIAECRKMIGGVDKDGDGTIDFEEFKIMMTMGSRR). Ca(2+)-binding residues include aspartate 46, asparagine 48, aspartate 50, lysine 52, and glutamate 57. Residues aspartate 119, aspartate 121, asparagine 123, serine 125, glutamate 130, aspartate 155, aspartate 157, aspartate 159, threonine 161, and glutamate 166 each contribute to the Ca(2+) site.

In terms of biological role, potential calcium sensor. This is Probable calcium-binding protein CML25 (CML25) from Arabidopsis thaliana (Mouse-ear cress).